The primary structure comprises 326 residues: tRNA uridine(34) hydroxylase (326 aa).

One can recognise a Rhodanese domain in the interval 122 to 218; that stretch reads EENRCLVLDV…YGQAVGTGKW (97 aa). Cysteine 178 acts as the Cysteine persulfide intermediate in catalysis.

This sequence belongs to the TrhO family.

It catalyses the reaction uridine(34) in tRNA + AH2 + O2 = 5-hydroxyuridine(34) in tRNA + A + H2O. Functionally, catalyzes oxygen-dependent 5-hydroxyuridine (ho5U) modification at position 34 in tRNAs. This Chlamydia abortus (strain DSM 27085 / S26/3) (Chlamydophila abortus) protein is tRNA uridine(34) hydroxylase.